Here is a 68-residue protein sequence, read N- to C-terminus: Conotoxin TsMMSK-021 (68 aa).

A signal peptide spans 1–20 (MMSKLGVLLTICLLLFPLTA). Residues 21-52 (VRLDGDQHTDRPADRMQDIATEQHPLFDPVKR) constitute a propeptide that is removed on maturation. 3 disulfide bridges follow: C53–C66, C54–C62, and C58–C65. Position 64 is a 4-hydroxyproline (P64).

This sequence belongs to the conotoxin M superfamily. Expressed by the venom duct.

Its subcellular location is the secreted. The protein is Conotoxin TsMMSK-021 of Conus tessulatus (Tessellate cone).